The chain runs to 357 residues: Dihydroorotate dehydrogenase (quinone) (357 aa).

FMN contacts are provided by residues 66–70 (AGFDK) and threonine 90. Lysine 70 is a binding site for substrate. 115–119 (NRMGF) provides a ligand contact to substrate. The FMN site is built by asparagine 143 and asparagine 176. Residue asparagine 176 participates in substrate binding. The Nucleophile role is filled by serine 179. Asparagine 181 is a binding site for substrate. Residues lysine 212 and threonine 240 each contribute to the FMN site. Substrate is bound at residue 241 to 242 (NT). FMN-binding positions include glycine 264, glycine 293, and 314-315 (YT).

This sequence belongs to the dihydroorotate dehydrogenase family. Type 2 subfamily. As to quaternary structure, monomer. Requires FMN as cofactor.

Its subcellular location is the cell membrane. It catalyses the reaction (S)-dihydroorotate + a quinone = orotate + a quinol. The protein operates within pyrimidine metabolism; UMP biosynthesis via de novo pathway; orotate from (S)-dihydroorotate (quinone route): step 1/1. Catalyzes the conversion of dihydroorotate to orotate with quinone as electron acceptor. This is Dihydroorotate dehydrogenase (quinone) from Mycobacterium tuberculosis (strain ATCC 25177 / H37Ra).